We begin with the raw amino-acid sequence, 418 residues long: CinA-like protein (418 aa).

Belongs to the CinA family.

In Leptospira interrogans serogroup Icterohaemorrhagiae serovar Lai (strain 56601), this protein is CinA-like protein.